The primary structure comprises 467 residues: MPTMRNSIFSEKIYPILLSAYRWYLRTPERSLEEAYKAALNIKAIEDEHFNGNKIDFNSAIYSNSVMDYFESDLAQELKTARMRLTEFRFSRWFSNESHQKAARKAGIEYPSSNVTLEKLKFIDEVISKYIITDYEIVAPSGVSESQVRTTSSQPPENPSLTDALRTNDINKNNLVERIYTPTSPPQLIKQRTEQSKKSRGKADTTGILPRSILSTIGRLQIELDPNAEQDVINNFRQAQKRSIISIRFILLIIIVPLLTHQLSKALIVSPIFNHFKNDHTEQIFLNSEMEEEALSTLHRFEERIKFENLISNAPPLSAEAIETQIKEKAEELAAEFRGESSNAIKNVFADIFSVGAFIWLLLVSKPSIMVLKEFFDNVVYGLSDSAKAFIIILFTDVFVGFHSPHGWEVILEGLSRHWGLPANRDFIFLFIATFPVILDTIFKYWIFRYLNRISPSAVATYRNMNE.

The segment covering 146-161 (SQVRTTSSQPPENPSL) has biased composition (polar residues). Disordered stretches follow at residues 146-167 (SQVRTTSSQPPENPSLTDALRT) and 186-205 (PQLIKQRTEQSKKSRGKADT). The span at 191–203 (QRTEQSKKSRGKA) shows a compositional bias: basic and acidic residues. Helical transmembrane passes span 249-269 (FILLIIIVPLLTHQLSKALIV), 352-372 (IFSVGAFIWLLLVSKPSIMVL), 391-411 (IIILFTDVFVGFHSPHGWEVI), and 427-447 (FIFLFIATFPVILDTIFKYWI).

This sequence belongs to the CemA family.

It localises to the cell inner membrane. Functionally, required for H(+) efflux immediately after light irradiation to form a rapid H(+) concentration gradient across the thylakoid membranes. Together with PxcL, contributes to transient H(+) uptake following dark to light transition. In Nostoc sp. (strain PCC 7120 / SAG 25.82 / UTEX 2576), this protein is Proton extrusion protein PxcA.